The primary structure comprises 339 residues: Bifunctional NMN adenylyltransferase/Nudix hydrolase (339 aa).

An NMN adenylyltransferase region spans residues 1–183; sequence MQTKYQYGIY…RYIALCDEYQ (183 aa). Residues 199-335 enclose the Nudix hydrolase domain; sequence PTFITTDAVV…EDHFQIIQHF (137 aa). A Nudix box motif is present at residues 233–254; it reads GFIKQNETLVEGMLRELKEETR.

It in the N-terminal section; belongs to the archaeal NMN adenylyltransferase family. Mg(2+) serves as cofactor. Requires Mn(2+) as cofactor.

The protein resides in the cytoplasm. The enzyme catalyses beta-nicotinamide D-ribonucleotide + ATP + H(+) = diphosphate + NAD(+). The protein operates within cofactor biosynthesis; NAD(+) biosynthesis; NAD(+) from nicotinamide D-ribonucleotide: step 1/1. Its function is as follows. The Nudix hydrolase domain is active on ADP-ribose, (2')-phospho-ADP-ribose, IDP-ribose and NADPH. This is Bifunctional NMN adenylyltransferase/Nudix hydrolase from Synechocystis sp. (strain ATCC 27184 / PCC 6803 / Kazusa).